Reading from the N-terminus, the 355-residue chain is Peptide chain release factor 1 (355 aa).

Glutamine 231 is modified (N5-methylglutamine). The interval 283–303 (LAKESEARKSQVGSGDRSERI) is disordered.

It belongs to the prokaryotic/mitochondrial release factor family. Post-translationally, methylated by PrmC. Methylation increases the termination efficiency of RF1.

Its subcellular location is the cytoplasm. Its function is as follows. Peptide chain release factor 1 directs the termination of translation in response to the peptide chain termination codons UAG and UAA. This chain is Peptide chain release factor 1, found in Campylobacter lari (strain RM2100 / D67 / ATCC BAA-1060).